Reading from the N-terminus, the 272-residue chain is Shikimate dehydrogenase (NADP(+)) (272 aa).

Residues 14–16 and threonine 61 contribute to the shikimate site; that span reads SKS. Lysine 65 functions as the Proton acceptor in the catalytic mechanism. Glutamate 77 serves as a coordination point for NADP(+). Asparagine 86 and aspartate 102 together coordinate shikimate. NADP(+)-binding positions include 126–130, 149–154, and methionine 213; these read GAGGA and NRTVSR. Shikimate is bound at residue tyrosine 215. Glycine 237 contributes to the NADP(+) binding site.

This sequence belongs to the shikimate dehydrogenase family. In terms of assembly, homodimer.

It carries out the reaction shikimate + NADP(+) = 3-dehydroshikimate + NADPH + H(+). Its pathway is metabolic intermediate biosynthesis; chorismate biosynthesis; chorismate from D-erythrose 4-phosphate and phosphoenolpyruvate: step 4/7. In terms of biological role, involved in the biosynthesis of the chorismate, which leads to the biosynthesis of aromatic amino acids. Catalyzes the reversible NADPH linked reduction of 3-dehydroshikimate (DHSA) to yield shikimate (SA). The chain is Shikimate dehydrogenase (NADP(+)) from Escherichia coli O7:K1 (strain IAI39 / ExPEC).